A 179-amino-acid chain; its full sequence is SCAN domain-containing protein 1 (179 aa).

The segment at 1 to 104 (MAATEPILAA…PGPAGSRLGP (104 aa)) is disordered. Over residues 52–80 (SPNAAVPEAIPTPRAAASAALELPLGPAP) the composition is skewed to low complexity. An SCAN box domain is found at 108 to 166 (RQRFRQFRYQDAAGPREAFRQLRELSRQWLRPDIRTKEQIVEMLVQEQLLAILPEAARA).

Interacts with ZNF202.

It is found in the nucleus. May regulate transcriptional activity. This chain is SCAN domain-containing protein 1 (SCAND1), found in Homo sapiens (Human).